Consider the following 171-residue polypeptide: MAEKRNIFLVGPMGAGKSTIGRHLAQMLHLEFHDSDQEIEQRTGADIAWVFDVEGEEGFRRREAQVIADLSEKQGIVLATGGGSVQSKDIRNHLSARGIVVYLETTIDKQVARTQRDKRRPLLQVDDPREVLENLAEIRNPLYEEIADVIVKTDDQSAKVVANQIIEQLGF.

Residue 14 to 19 (GAGKST) coordinates ATP. Residue serine 18 participates in Mg(2+) binding. 3 residues coordinate substrate: aspartate 36, arginine 60, and glycine 82. Arginine 120 lines the ATP pocket. Arginine 139 is a binding site for substrate. Glutamine 156 contacts ATP.

Belongs to the shikimate kinase family. As to quaternary structure, monomer. It depends on Mg(2+) as a cofactor.

It localises to the cytoplasm. It catalyses the reaction shikimate + ATP = 3-phosphoshikimate + ADP + H(+). Its pathway is metabolic intermediate biosynthesis; chorismate biosynthesis; chorismate from D-erythrose 4-phosphate and phosphoenolpyruvate: step 5/7. Its function is as follows. Catalyzes the specific phosphorylation of the 3-hydroxyl group of shikimic acid using ATP as a cosubstrate. The polypeptide is Shikimate kinase (Shewanella sp. (strain ANA-3)).